A 125-amino-acid polypeptide reads, in one-letter code: Putative glutaredoxin-C2 (125 aa).

Positions A2–W103 constitute a Glutaredoxin domain. C22 and C25 are disulfide-bonded.

It belongs to the glutaredoxin family. CC-type subfamily.

It is found in the cytoplasm. Functionally, has a glutathione-disulfide oxidoreductase activity in the presence of NADPH and glutathione reductase. Reduces low molecular weight disulfides and proteins. The sequence is that of Putative glutaredoxin-C2 (GRXC2) from Oryza sativa subsp. japonica (Rice).